We begin with the raw amino-acid sequence, 196 residues long: MSDLFTTFDSNGVAEHHLHHNHNSTSSASGLLHDPPMASPSQHSPMTNNSNSSSQNGGPVSGLGTGTGPISGGSKSSNHTSSAAGSENTPMLTKPRLTELVREVDTTTQLDEDVEELLLQIIDDFVEDTVKSTSAFAKHRKSNKIEVRDVQLHFERKYNMWIPGFGTDELRPYKRAAVTEAHKQRLALIRKTIKKY.

The tract at residues 17–97 (HLHHNHNSTS…NTPMLTKPRL (81 aa)) is disordered. A compositionally biased stretch (low complexity) spans 48–58 (NNSNSSSQNGG). Over residues 59–71 (PVSGLGTGTGPIS) the composition is skewed to gly residues. The segment covering 72–86 (GGSKSSNHTSSAAGS) has biased composition (low complexity). Positions 93-160 (TKPRLTELVR…QLHFERKYNM (68 aa)) constitute a Histone-fold domain.

The protein belongs to the TAF12 family. In terms of assembly, belongs to the TFIID complex which is composed of TATA binding protein (Tbp) and a number of TBP-associated factors (TAFs). Interacts with Tbp, Taf2 and Taf4.

It is found in the nucleus. TFIID is a multimeric protein complex that plays a central role in mediating promoter responses to various activators and repressors. The protein is Transcription initiation factor TFIID subunit 12 (Taf12) of Drosophila melanogaster (Fruit fly).